A 649-amino-acid polypeptide reads, in one-letter code: Choline transporter-like protein 3 (649 aa).

Residues 33 to 53 (AWLFLFFLFWTGLVFIMGYSV) traverse the membrane as a helical segment. 2 N-linked (GlcNAc...) asparagine glycosylation sites follow: Asn-136 and Asn-151. Transmembrane regions (helical) follow at residues 213-233 (DTVL…MFTF), 235-255 (FITT…LLFV), 284-304 (LLGF…LIYV), 334-354 (LWTF…LLSL), and 384-404 (LIGL…AVAG). N-linked (GlcNAc...) asparagine glycans are attached at residues Asn-414, Asn-502, and Asn-520. Helical transmembrane passes span 533–553 (FIIF…GLMA) and 562–582 (VWAV…HSFL).

This sequence belongs to the CTL (choline transporter-like) family.

It localises to the membrane. This is Choline transporter-like protein 3 (SLC44A3) from Bos taurus (Bovine).